A 555-amino-acid polypeptide reads, in one-letter code: Transcriptional adapter 2b (555 aa).

Residues 8–63 (FTKYNCTNCQDDIQGIRVHCAECENFDLCLQCFAAGAEIGAHQNNHSYQFMDTGTS) form a ZZ-type zinc finger. Cys13, Cys16, Cys27, Cys30, Cys36, Cys39, His49, and His53 together coordinate Zn(2+). In terms of domain architecture, SANT spans 69–121 (RGKGAWTAREEIRLLDAIEQYGFGNWEDISKHIETKSAEDAKEEYVNKFVNGT). The tract at residues 318 to 372 (THRSTGPYGHGKTDHTHTSNGSHRPPSSSLHSPQPNLRKVEMSSGGEASSNSIAP) is disordered. Low complexity predominate over residues 339–352 (SHRPPSSSLHSPQP). Polar residues predominate over residues 363-372 (GEASSNSIAP).

As to quaternary structure, component of histone acetyltransferase complexes containing Gcn5 and Ada3. In terms of assembly, can heterooligomerize with Isoform A. Component of the Spt-Ada-Gcn5 acetyltransferase (SAGA) complex consisting of Ada1, Ada2b (Isoform B), Ada3, wda, Saf6, Spt3, Spt7, Spt20, Taf9, Taf10b, Taf12, Nipped-A/Tra1, Sf3b3, Sf3b5, not/nonstop, Sgf11, Sgf29, e(y)2, Atxn7 and Gcn5. Taf5 and Taf10, which has partially redundant properties with Taf10b, may also be part of this complex. Interacts (via C-terminus) with Spt3 and Taf12; the interactions are direct. Interacts with Ada3; the interaction is probably direct. May also interact directly with Spt7 and Gcn5. Interacts with p53. Can heterooligomerize with Isoform B. Component of the Chiffon histone acetyltransferase (CHAT) complex consisting of Ada3, Sgf29, Gcn5, chif/chiffon and Ada2b (Isoform A). Interacts (via N-terminus) with Gcn5 and Ada3; the interaction is direct. Can interact directly with Spt7 in vitro but in vivo this interaction is not stable probably due to the absence of other SAGA components. Interacts with p53. As to expression, expressed in nurse cells of stage 10 egg chambers and transcripts are dumped into the oocyte when nurse cells degenerate at late oogenesis.

It is found in the nucleus. Its function is as follows. Component of several Gcn5-containing histone acetyltransferase complexes that regulate nucleosome organization; involved in acetylation of histone H3, particularly on Lys-10 (H3K9ac) and Lys-15 (H3K14ac). Regulates the transcription of a subset of genes during development; affects recruitment of RNA polymerase II. May be involved in the function of some acidic activation domains, which activate transcription at distant sites. Involved in the p53-dependent apoptosis pathway response to DNA damage by genotoxic agents. In terms of biological role, component of the SAGA histone acetyltransferase complex, which predominantly acetylates histone H3. Functionally, component of the CHAT histone acetyltransferase complex, which predominantly acetylates histone H3. This is Transcriptional adapter 2b from Drosophila melanogaster (Fruit fly).